A 284-amino-acid chain; its full sequence is BTB/POZ domain-containing protein 2 (284 aa).

The 72-residue stretch at 37-108 folds into the BTB domain; that stretch reads SDTTLIIKGE…LYCDSPRIPA (72 aa).

In terms of assembly, interacts with cul3.

It is found in the cytoplasm. It localises to the nucleus. Its pathway is protein modification; protein ubiquitination. Its function is as follows. Probable substrate-specific adapter of an E3 ubiquitin-protein ligase complex which mediates the ubiquitination and subsequent proteasomal degradation of target proteins. The polypeptide is BTB/POZ domain-containing protein 2 (btb2) (Schizosaccharomyces pombe (strain 972 / ATCC 24843) (Fission yeast)).